We begin with the raw amino-acid sequence, 206 residues long: Large ribosomal subunit protein uL22m (206 aa).

Residues 1-40 constitute a mitochondrion transit peptide; sequence MAAAVLGQLGALWIHNLRSRGRLAWGVLPQSYVHTSASLD.

This sequence belongs to the universal ribosomal protein uL22 family. As to quaternary structure, component of the mitochondrial ribosome large subunit (39S) which comprises a 16S rRNA and about 50 distinct proteins.

It localises to the mitochondrion. This chain is Large ribosomal subunit protein uL22m (MRPL22), found in Pongo abelii (Sumatran orangutan).